A 545-amino-acid polypeptide reads, in one-letter code: CTP synthase (545 aa).

Positions 1 to 266 (MKTKFIFITG…DQKIAIMLKL (266 aa)) are amidoligase domain. Ser14 contributes to the CTP binding site. Ser14 lines the UTP pocket. Residues 15–20 (SLGKGL) and Asp72 each bind ATP. The Mg(2+) site is built by Asp72 and Glu140. CTP-binding positions include 147–149 (DIE), 187–192 (KTKPTQ), and Lys223. UTP is bound by residues 187 to 192 (KTKPTQ) and Lys223. A Glutamine amidotransferase type-1 domain is found at 291 to 545 (TIGIVGKYVD…IKASCENKNK (255 aa)). Gly353 is a binding site for L-glutamine. The active-site Nucleophile; for glutamine hydrolysis is Cys380. L-glutamine-binding positions include 381 to 384 (LGMQ), Glu404, and Arg472. Catalysis depends on residues His518 and Glu520.

It belongs to the CTP synthase family. Homotetramer.

It carries out the reaction UTP + L-glutamine + ATP + H2O = CTP + L-glutamate + ADP + phosphate + 2 H(+). The enzyme catalyses L-glutamine + H2O = L-glutamate + NH4(+). It catalyses the reaction UTP + NH4(+) + ATP = CTP + ADP + phosphate + 2 H(+). It participates in pyrimidine metabolism; CTP biosynthesis via de novo pathway; CTP from UDP: step 2/2. Allosterically activated by GTP, when glutamine is the substrate; GTP has no effect on the reaction when ammonia is the substrate. The allosteric effector GTP functions by stabilizing the protein conformation that binds the tetrahedral intermediate(s) formed during glutamine hydrolysis. Inhibited by the product CTP, via allosteric rather than competitive inhibition. Catalyzes the ATP-dependent amination of UTP to CTP with either L-glutamine or ammonia as the source of nitrogen. Regulates intracellular CTP levels through interactions with the four ribonucleotide triphosphates. In Maridesulfovibrio salexigens (strain ATCC 14822 / DSM 2638 / NCIMB 8403 / VKM B-1763) (Desulfovibrio salexigens), this protein is CTP synthase.